A 558-amino-acid chain; its full sequence is MTTHEPRTVRAPRGPHKTAKGWIQEAAKRMLMNNLDPEVAEHPESLVVYGGRGKAARNWEAFDHIVATLDRLENDETLLVQSGKPVAVLRTHEWAPRVLIANSNLVPHWANWETFDKLDQAGLMMYGQMTAGSWIYIGTQGILQGTYETFAGAAQKHFGGSLKGTITVTAGLGGMGGAQPLAVKLAGGVSITIEIDPTRIRKRLETRYLDEVADNLQDAIARAEGYKAQGVARSIGVQGNAAELVPQLVEMNWTPDLLTDQTSAHDPMWGYIPPVNADEDAGKLRSEHAEEYRQRAYAAMAAHVRAMLELQKRGAVTFDYGNNLRQRAFEAGVEDAFSYPGFVPAFIRDSFCEGRGPFRWVALSGDPQDIYATDKALLELFPEDERLQSWLTYAADQIAFQGLPARICWLGYKERDRAAKLFNDMVKDGRVKAPIVIGRDHLDAGSVASPYRETEAMKDGSDAVSDWPLLNFGVGIASGASWMSFHHGGGVGLGFSQHSGLVIVADGTDEAAKKLSRALTNDPGMGVIRHADAGYDHALDVARERGIDLPSLGIKDHA.

NAD(+)-binding positions include 50 to 51, Q128, 174 to 176, E194, R199, 240 to 241, 261 to 265, 271 to 272, and Y320; these read GG, GMG, NA, QTSAH, and YI. The active site involves C408. Residue G490 coordinates NAD(+).

This sequence belongs to the urocanase family. It depends on NAD(+) as a cofactor.

The protein localises to the cytoplasm. The enzyme catalyses 4-imidazolone-5-propanoate = trans-urocanate + H2O. It functions in the pathway amino-acid degradation; L-histidine degradation into L-glutamate; N-formimidoyl-L-glutamate from L-histidine: step 2/3. In terms of biological role, catalyzes the conversion of urocanate to 4-imidazolone-5-propionate. This is Urocanate hydratase from Deinococcus radiodurans (strain ATCC 13939 / DSM 20539 / JCM 16871 / CCUG 27074 / LMG 4051 / NBRC 15346 / NCIMB 9279 / VKM B-1422 / R1).